Consider the following 515-residue polypeptide: Glycosyltransferase family 92 protein F59C6.8 (515 aa).

Residues 18-38 (LFIFIAVCLGFLIAVTILAGL) traverse the membrane as a helical segment. The GT92 domain maps to 163 to 456 (RKVVACFSPL…IEVCYNRIFY (294 aa)).

This sequence belongs to the glycosyltransferase 92 family.

Its subcellular location is the membrane. The polypeptide is Glycosyltransferase family 92 protein F59C6.8 (Caenorhabditis elegans).